We begin with the raw amino-acid sequence, 191 residues long: Small ribosomal subunit protein uS7 (191 aa).

The tract at residues Asn56–Leu80 is disordered.

It belongs to the universal ribosomal protein uS7 family. Part of the 30S ribosomal subunit. Contacts proteins S9 and S11.

Its function is as follows. One of the primary rRNA binding proteins, it binds directly to 16S rRNA where it nucleates assembly of the head domain of the 30S subunit. Is located at the subunit interface close to the decoding center, probably blocks exit of the E-site tRNA. In Coxiella burnetii (strain CbuK_Q154) (Coxiella burnetii (strain Q154)), this protein is Small ribosomal subunit protein uS7.